Consider the following 785-residue polypeptide: E3 UFM1-protein ligase 1 homolog (785 aa).

The disordered stretch occupies residues 404 to 483 (GGNASNQLDD…GGGGSNKKSV (80 aa)).

Belongs to the UFL1 family.

In terms of biological role, E3 UFM1-protein ligase that mediates ufmylation of target proteins. In Drosophila willistoni (Fruit fly), this protein is E3 UFM1-protein ligase 1 homolog.